The primary structure comprises 69 residues: Putative membrane protein insertion efficiency factor (69 aa).

It belongs to the UPF0161 family.

The protein resides in the cell membrane. Could be involved in insertion of integral membrane proteins into the membrane. The polypeptide is Putative membrane protein insertion efficiency factor (Clostridium botulinum (strain ATCC 19397 / Type A)).